Consider the following 203-residue polypeptide: UPF0637 protein SERP0693 (203 aa).

It belongs to the UPF0637 family.

This chain is UPF0637 protein SERP0693, found in Staphylococcus epidermidis (strain ATCC 35984 / DSM 28319 / BCRC 17069 / CCUG 31568 / BM 3577 / RP62A).